The primary structure comprises 590 residues: Aspartate--tRNA(Asp/Asn) ligase (590 aa).

Glutamate 173 is a binding site for L-aspartate. The interval glutamine 197 to lysine 200 is aspartate. An L-aspartate-binding site is contributed by arginine 219. ATP-binding positions include arginine 219–glutamate 221 and glutamine 228. Histidine 450 provides a ligand contact to L-aspartate. Residue glutamate 484 coordinates ATP. Arginine 491 serves as a coordination point for L-aspartate. Glycine 536 to arginine 539 serves as a coordination point for ATP.

This sequence belongs to the class-II aminoacyl-tRNA synthetase family. Type 1 subfamily. In terms of assembly, homodimer.

It localises to the cytoplasm. The enzyme catalyses tRNA(Asx) + L-aspartate + ATP = L-aspartyl-tRNA(Asx) + AMP + diphosphate. In terms of biological role, aspartyl-tRNA synthetase with relaxed tRNA specificity since it is able to aspartylate not only its cognate tRNA(Asp) but also tRNA(Asn). Reaction proceeds in two steps: L-aspartate is first activated by ATP to form Asp-AMP and then transferred to the acceptor end of tRNA(Asp/Asn). The chain is Aspartate--tRNA(Asp/Asn) ligase from Coxiella burnetii (strain RSA 493 / Nine Mile phase I).